Here is a 488-residue protein sequence, read N- to C-terminus: Ribulose bisphosphate carboxylase large chain (488 aa).

Positions 127 and 177 each coordinate substrate. Lys-179 acts as the Proton acceptor in catalysis. Substrate is bound at residue Lys-181. Residues Lys-205, Asp-207, and Glu-208 each contribute to the Mg(2+) site. Residue Lys-205 is modified to N6-carboxylysine. The active-site Proton acceptor is the His-297. Residues Arg-298, His-330, and Ser-382 each coordinate substrate.

It belongs to the RuBisCO large chain family. Type I subfamily. In terms of assembly, heterohexadecamer of 8 large chains and 8 small chains. Mg(2+) serves as cofactor.

The protein localises to the plastid. It is found in the chloroplast. The enzyme catalyses 2 (2R)-3-phosphoglycerate + 2 H(+) = D-ribulose 1,5-bisphosphate + CO2 + H2O. The catalysed reaction is D-ribulose 1,5-bisphosphate + O2 = 2-phosphoglycolate + (2R)-3-phosphoglycerate + 2 H(+). In terms of biological role, ruBisCO catalyzes two reactions: the carboxylation of D-ribulose 1,5-bisphosphate, the primary event in carbon dioxide fixation, as well as the oxidative fragmentation of the pentose substrate in the photorespiration process. Both reactions occur simultaneously and in competition at the same active site. This is Ribulose bisphosphate carboxylase large chain from Chrysotila carterae (Marine alga).